The sequence spans 421 residues: UDP-N-acetylglucosamine 1-carboxyvinyltransferase (421 aa).

22–23 contacts phosphoenolpyruvate; sequence KN. Arg-92 is a binding site for UDP-N-acetyl-alpha-D-glucosamine. The active-site Proton donor is Asp-116. Residues 121–125, Asp-307, and Ile-330 each bind UDP-N-acetyl-alpha-D-glucosamine; that span reads RPIDQ.

Belongs to the EPSP synthase family. MurA subfamily.

It is found in the cytoplasm. The catalysed reaction is phosphoenolpyruvate + UDP-N-acetyl-alpha-D-glucosamine = UDP-N-acetyl-3-O-(1-carboxyvinyl)-alpha-D-glucosamine + phosphate. It participates in cell wall biogenesis; peptidoglycan biosynthesis. In terms of biological role, cell wall formation. Adds enolpyruvyl to UDP-N-acetylglucosamine. The chain is UDP-N-acetylglucosamine 1-carboxyvinyltransferase from Lactobacillus johnsonii (strain CNCM I-12250 / La1 / NCC 533).